Reading from the N-terminus, the 205-residue chain is Small ribosomal subunit protein mS26 (205 aa).

A mitochondrion-targeting transit peptide spans M1–G26.

This sequence belongs to the mitochondrion-specific ribosomal protein mS26 family. In terms of assembly, component of the mitochondrial ribosome small subunit (28S) which comprises a 12S rRNA and about 30 distinct proteins.

Its subcellular location is the mitochondrion. The polypeptide is Small ribosomal subunit protein mS26 (MRPS26) (Bos taurus (Bovine)).